Here is a 560-residue protein sequence, read N- to C-terminus: Developmental and secondary metabolism regulator veA (560 aa).

The region spanning 35 to 241 (GRRLWYRMRV…AEQGCRVRIR (207 aa)) is the Velvet domain. A Nuclear localization signal motif is present at residues 49-54 (ERARAC). 3 disordered regions span residues 49–70 (ERAR…VDPP), 171–197 (KEDK…ATGG), and 250–560 (DGKG…RLRY). The segment covering 171 to 183 (KEDKDKDKERDVE) has biased composition (basic and acidic residues). Positions 336-355 (AAPPQPFAQPPSVPASPVYP) are enriched in pro residues. Positions 395 to 405 (PRRESIHHDYR) are enriched in basic and acidic residues. Pro residues predominate over residues 411–439 (QLPPLPPPPYYPPTPQQSHMPPPQPPQVL). Over residues 444–453 (IDSNSKSNNR) the composition is skewed to polar residues. The tract at residues 455–496 (PMPSPTALANSAPRPLASLAPLAPLMQSTSSSAGKGPVHPAT) is PEST. Residues 461-479 (ALANSAPRPLASLAPLAPL) show a composition bias toward low complexity. Composition is skewed to basic and acidic residues over residues 508–535 (RAHD…RSED) and 546–560 (RRAD…RLRY).

Belongs to the velvet family. VeA subfamily. Component of the heterotrimeric velvet complex composed of laeA, veA and velB; VeA acting as a bridging protein between laeA and velB.

It localises to the nucleus. It is found in the cytoplasm. Its function is as follows. Component of the velvet transcription factor complex that controls sexual/asexual developmental ratio in response to light, promoting sexual development in the darkness while stimulating asexual sporulation under illumination. The velvet complex acts as a global regulator for secondary metabolite gene expression. Positively regulates chaetoglobosin A biosynthesis by controlling the expression of core genes of the chaetoglobosin A biosynthetic gene cluster and other relevant regulators in a light-dependent manner. VeA directly regulates transcription factors brlA, laeA, and the chaetoglobosin A cluster-specific transcription regulator cheR. Also directly regulates the expression of one of the chaetoglobosin A cluster cytochrome P450 monooxygenases (cheE or cheG), but only indirectly regulates the expression of the PKS-NRPS hybrid cheA. Moreover, VeA has a significant effect on the asexual spores production, irrespective of light or dark condition. The sequence is that of Developmental and secondary metabolism regulator veA from Chaetomium globosum (strain ATCC 6205 / CBS 148.51 / DSM 1962 / NBRC 6347 / NRRL 1970) (Soil fungus).